The sequence spans 154 residues: Ubiquitin-conjugating enzyme E2 L3 (154 aa).

The UBC core domain maps to 2-149; the sequence is AASRRLMKEL…AEEFTKKYGE (148 aa). Catalysis depends on Cys86, which acts as the Glycyl thioester intermediate. Lys131 is subject to N6-acetyllysine.

The protein belongs to the ubiquitin-conjugating enzyme family. Interacts with PRKN; involved in ubiquitination and degradation of misfolded proteins. Interacts with UBE3A. Interacts with CCNB1IP1, CBL, ZAP70, RNF19A, RNF19B and RNF144B. Interacts with ARIH1. Interacts with ARIH2 (via RING-type 1). Interacts with NCOA1; they functionally interact to regulate progesterone receptor transcriptional activity. Interacts with NDFIP1 (via N-terminus); the interaction mediates recruitment of UBE2L3 to ITCH and causes MAP3K7 ubiquitination. In terms of processing, ubiquitinated. The alteration of UBE2L3 protein levels during the S-phase of the cell cycle is due to ubiquitin-dependent proteasomal degradation. Autoubiquitinated in vitro.

The protein resides in the nucleus. It localises to the cytoplasm. The catalysed reaction is S-ubiquitinyl-[E1 ubiquitin-activating enzyme]-L-cysteine + [E2 ubiquitin-conjugating enzyme]-L-cysteine = [E1 ubiquitin-activating enzyme]-L-cysteine + S-ubiquitinyl-[E2 ubiquitin-conjugating enzyme]-L-cysteine.. It participates in protein modification; protein ubiquitination. Functionally, ubiquitin-conjugating enzyme E2 that specifically acts with HECT-type and RBR family E3 ubiquitin-protein ligases. Does not function with most RING-containing E3 ubiquitin-protein ligases because it lacks intrinsic E3-independent reactivity with lysine: in contrast, it has activity with the RBR family E3 enzymes, such as PRKN, RNF31 and ARIH1, that function like RING-HECT hybrids. Accepts ubiquitin from the E1 complex and catalyzes its covalent attachment to other proteins. Mediates ubiquitination by the CUL9-RBX1 complex. In vitro catalyzes 'Lys-11'-linked polyubiquitination. Involved in the selective degradation of short-lived and abnormal proteins. Down-regulated during the S-phase it is involved in progression through the cell cycle. Regulates nuclear hormone receptors transcriptional activity. May play a role in myelopoiesis. This chain is Ubiquitin-conjugating enzyme E2 L3 (UBE2L3), found in Bos taurus (Bovine).